The chain runs to 714 residues: Fatty acid oxidation complex subunit alpha (714 aa).

The interval 1-190 (MDTVSAFKLE…KAGLVDEVVP (190 aa)) is enoyl-CoA hydratase. Residues 306–714 (GPLTSIAVLG…TFWPADERLT (409 aa)) are 3-hydroxyacyl-CoA dehydrogenase.

It in the N-terminal section; belongs to the enoyl-CoA hydratase/isomerase family. This sequence in the central section; belongs to the 3-hydroxyacyl-CoA dehydrogenase family. As to quaternary structure, heterotetramer of two alpha chains (FadJ) and two beta chains (FadI).

Its subcellular location is the cytoplasm. The enzyme catalyses a (3S)-3-hydroxyacyl-CoA = a (2E)-enoyl-CoA + H2O. It carries out the reaction a 4-saturated-(3S)-3-hydroxyacyl-CoA = a (3E)-enoyl-CoA + H2O. The catalysed reaction is a (3S)-3-hydroxyacyl-CoA + NAD(+) = a 3-oxoacyl-CoA + NADH + H(+). It catalyses the reaction (3S)-3-hydroxybutanoyl-CoA = (3R)-3-hydroxybutanoyl-CoA. Its pathway is lipid metabolism; fatty acid beta-oxidation. Its function is as follows. Catalyzes the formation of a hydroxyacyl-CoA by addition of water on enoyl-CoA. Also exhibits 3-hydroxyacyl-CoA epimerase and 3-hydroxyacyl-CoA dehydrogenase activities. This chain is Fatty acid oxidation complex subunit alpha, found in Klebsiella pneumoniae (strain 342).